We begin with the raw amino-acid sequence, 119 residues long: Protein TusC (119 aa).

The protein belongs to the DsrF/TusC family. Heterohexamer, formed by a dimer of trimers. The hexameric TusBCD complex contains 2 copies each of TusB, TusC and TusD. The TusBCD complex interacts with TusE.

The protein localises to the cytoplasm. Functionally, part of a sulfur-relay system required for 2-thiolation of 5-methylaminomethyl-2-thiouridine (mnm(5)s(2)U) at tRNA wobble positions. This is Protein TusC from Pectobacterium carotovorum subsp. carotovorum (strain PC1).